Consider the following 819-residue polypeptide: DNA topoisomerase 4 subunit A (819 aa).

In terms of domain architecture, Topo IIA-type catalytic spans 30–496; it reads LPDIRDGLKP…QIIEIDTASL (467 aa). Tyr118 acts as the O-(5'-phospho-DNA)-tyrosine intermediate in catalysis.

It belongs to the type II topoisomerase GyrA/ParC subunit family. ParC type 2 subfamily. In terms of assembly, heterotetramer composed of ParC and ParE.

It localises to the cell membrane. It catalyses the reaction ATP-dependent breakage, passage and rejoining of double-stranded DNA.. Its function is as follows. Topoisomerase IV is essential for chromosome segregation. It relaxes supercoiled DNA. Performs the decatenation events required during the replication of a circular DNA molecule. The protein is DNA topoisomerase 4 subunit A of Streptococcus pyogenes serotype M1.